A 155-amino-acid polypeptide reads, in one-letter code: MNPVRKKRLFIVLAILAGVGIAVALALSALQQNINLFYTPSQIAAGEAPEGTRIRAGGLVEEGSVKRTNDSLSVAFRVTDGAQAITITYQGILPDLFREGQGIVALGRVNADGVLVADEVLAKHDENYMPPEVTQALEKSGMMKHYEGGKQEYAK.

The Cytoplasmic segment spans residues 1–8 (MNPVRKKR). A helical; Signal-anchor for type II membrane protein membrane pass occupies residues 9 to 29 (LFIVLAILAGVGIAVALALSA). The Periplasmic segment spans residues 30–155 (LQQNINLFYT…YEGGKQEYAK (126 aa)). Heme is bound by residues H124 and Y128.

This sequence belongs to the CcmE/CycJ family.

It is found in the cell inner membrane. Its function is as follows. Heme chaperone required for the biogenesis of c-type cytochromes. Transiently binds heme delivered by CcmC and transfers the heme to apo-cytochromes in a process facilitated by CcmF and CcmH. The chain is Cytochrome c-type biogenesis protein CcmE from Stutzerimonas stutzeri (strain A1501) (Pseudomonas stutzeri).